The following is a 485-amino-acid chain: NADH-quinone oxidoreductase subunit N (485 aa).

14 helical membrane-spanning segments follow: residues 8–28 (LIALSPLLIVGLTVVVVMLCI), 35–55 (FVNATMTVIGLNIALLSLYFV), 75–95 (FYTGLVLLASLATSTFAYPWL), 105–125 (FYLLVLIAALGGILLSSANHL), 127–147 (SLFIGIELLSLPLFGLVGYAF), 159–179 (YMLLSAAASSFLLFGMALIYA), 203–223 (LLAGLGMMIVGLGFKLSLVPF), 235–255 (PAPVSTFLATAGKIAVFGAVM), 271–291 (IVLSIIAFASIMFGNVMAVSQ), 297–317 (LLGYSSIAHLGYLLVALIAVQ), 326–346 (VGVYLVGYLFSSLGAFGVVSL), 374–394 (AVMTVMMLSLAGIPMTLGFFG), 407–426 (LWWLTGAVVLGSAIGLYYYL), and 449–469 (ALTAGGVVVLISSIVVLFFGL).

This sequence belongs to the complex I subunit 2 family. In terms of assembly, NDH-1 is composed of 13 different subunits. Subunits NuoA, H, J, K, L, M, N constitute the membrane sector of the complex.

It is found in the cell inner membrane. It carries out the reaction a quinone + NADH + 5 H(+)(in) = a quinol + NAD(+) + 4 H(+)(out). Its function is as follows. NDH-1 shuttles electrons from NADH, via FMN and iron-sulfur (Fe-S) centers, to quinones in the respiratory chain. The immediate electron acceptor for the enzyme in this species is believed to be ubiquinone. Couples the redox reaction to proton translocation (for every two electrons transferred, four hydrogen ions are translocated across the cytoplasmic membrane), and thus conserves the redox energy in a proton gradient. The sequence is that of NADH-quinone oxidoreductase subunit N from Pectobacterium atrosepticum (strain SCRI 1043 / ATCC BAA-672) (Erwinia carotovora subsp. atroseptica).